Here is a 129-residue protein sequence, read N- to C-terminus: uncharacterized protein (129 aa).

The N-terminal stretch at M1–A17 is a signal peptide. Positions S26–S36 are enriched in low complexity. The tract at residues S26 to R76 is disordered.

This is an uncharacterized protein from Escherichia coli O157:H7.